The following is a 153-amino-acid chain: Fucose mutarotase (153 aa).

His-24 (proton donor) is an active-site residue. Asp-32 is a substrate binding site. Asp-69 is an active-site residue. Substrate-binding residues include Met-79, Tyr-120, Tyr-138, and Asn-140. Residue Tyr-120 is part of the active site.

This sequence belongs to the RbsD / FucU family. Mainly homodimer, but also exists as homotetramer, homooctamer, and homodecamer. The homodimeric form seems catalytically inactive. As to expression, widely expressed in various tissues and cell lines, including kidney, liver, and pancreas, marginally in muscle and testis.

The enzyme catalyses alpha-L-fucose = beta-L-fucose. Its pathway is carbohydrate metabolism; L-fucose metabolism. Its function is as follows. Involved in the interconversion between alpha- and beta-L-fucoses. L-Fucose (6-deoxy-L-galactose) exists as alpha-L-fucose (29.5%) and beta-L-fucose (70.5%), the beta-form is metabolized through the salvage pathway. GDP-L-fucose formed either by the de novo or salvage pathways is transported into the endoplasmic reticulum, where it serves as a substrate for N- and O-glycosylations by fucosyltransferases. Fucosylated structures expressed on cell surfaces or secreted in biological fluids are believed to play a critical role in cell-cell adhesion and recognition processes. The protein is Fucose mutarotase (Fuom) of Mus musculus (Mouse).